A 354-amino-acid polypeptide reads, in one-letter code: NADH-quinone oxidoreductase subunit H (354 aa).

8 helical membrane passes run 25–45 (LVRILVVAVVILLCVAYLILW), 91–111 (WLYLVAPVMTVVPAFAVWAVI), 126–146 (LLYAMAISSIGVYAVILAGWA), 170–190 (MGFALVLVLMTAGSLNLSEIV), 205–225 (FLSWNWLPLLPVFVIYFISGI), 253–273 (MAFALFFLAEYINMIVISALA), 290–310 (FIPGIFWLVLKIFALLSVFIW), and 330–350 (VFLPVCVFWVIVVGFWMMSPL).

It belongs to the complex I subunit 1 family. NDH-1 is composed of 14 different subunits. Subunits NuoA, H, J, K, L, M, N constitute the membrane sector of the complex.

The protein resides in the cell inner membrane. The enzyme catalyses a quinone + NADH + 5 H(+)(in) = a quinol + NAD(+) + 4 H(+)(out). In terms of biological role, NDH-1 shuttles electrons from NADH, via FMN and iron-sulfur (Fe-S) centers, to quinones in the respiratory chain. The immediate electron acceptor for the enzyme in this species is believed to be ubiquinone. Couples the redox reaction to proton translocation (for every two electrons transferred, four hydrogen ions are translocated across the cytoplasmic membrane), and thus conserves the redox energy in a proton gradient. This subunit may bind ubiquinone. The polypeptide is NADH-quinone oxidoreductase subunit H (Burkholderia mallei (strain ATCC 23344)).